Here is a 202-residue protein sequence, read N- to C-terminus: Outer-membrane lipoprotein carrier protein (202 aa).

Residues Met1–Ala20 form the signal peptide.

It belongs to the LolA family. In terms of assembly, monomer.

The protein resides in the periplasm. In terms of biological role, participates in the translocation of lipoproteins from the inner membrane to the outer membrane. Only forms a complex with a lipoprotein if the residue after the N-terminal Cys is not an aspartate (The Asp acts as a targeting signal to indicate that the lipoprotein should stay in the inner membrane). The sequence is that of Outer-membrane lipoprotein carrier protein from Aeromonas salmonicida (strain A449).